Consider the following 185-residue polypeptide: Elongation factor P (185 aa).

The protein belongs to the elongation factor P family.

The protein resides in the cytoplasm. The protein operates within protein biosynthesis; polypeptide chain elongation. In terms of biological role, involved in peptide bond synthesis. Stimulates efficient translation and peptide-bond synthesis on native or reconstituted 70S ribosomes in vitro. Probably functions indirectly by altering the affinity of the ribosome for aminoacyl-tRNA, thus increasing their reactivity as acceptors for peptidyl transferase. The protein is Elongation factor P of Staphylococcus epidermidis (strain ATCC 35984 / DSM 28319 / BCRC 17069 / CCUG 31568 / BM 3577 / RP62A).